The chain runs to 357 residues: Serpentine receptor class epsilon-31 (357 aa).

Transmembrane regions (helical) follow at residues 28–48, 61–81, 121–141, 165–185, 192–212, 253–273, and 283–303; these read VISI…NLSI, LMFL…GKFI, LLIF…FGIL, IPIF…FIVI, IIAR…WLFV, LVAV…SLTF, and FVEN…MFSI.

It belongs to the nematode receptor-like protein sre family.

The protein resides in the membrane. In Caenorhabditis elegans, this protein is Serpentine receptor class epsilon-31 (sre-31).